Consider the following 473-residue polypeptide: Photosystem II CP43 reaction center protein (473 aa).

The propeptide occupies 1–14 (MKTLYSLRRFYHVE). Threonine 15 carries the N-acetylthreonine modification. Threonine 15 carries the phosphothreonine modification. Transmembrane regions (helical) follow at residues 69–93 (LFEV…PHLA), 134–155 (LLGP…KDRN), 178–200 (KALY…RKIA), 255–275 (KPFA…LSYS), and 291–312 (WFNN…ASQA). [CaMn4O5] cluster is bound at residue glutamate 367. The chain crosses the membrane as a helical span at residues 447–471 (RARAAAAGFEKGIDRDFEPVLSMTP).

This sequence belongs to the PsbB/PsbC family. PsbC subfamily. As to quaternary structure, PSII is composed of 1 copy each of membrane proteins PsbA, PsbB, PsbC, PsbD, PsbE, PsbF, PsbH, PsbI, PsbJ, PsbK, PsbL, PsbM, PsbT, PsbX, PsbY, PsbZ, Psb30/Ycf12, at least 3 peripheral proteins of the oxygen-evolving complex and a large number of cofactors. It forms dimeric complexes. It depends on Binds multiple chlorophylls and provides some of the ligands for the Ca-4Mn-5O cluster of the oxygen-evolving complex. It may also provide a ligand for a Cl- that is required for oxygen evolution. PSII binds additional chlorophylls, carotenoids and specific lipids. as a cofactor.

The protein resides in the plastid membrane. Its function is as follows. One of the components of the core complex of photosystem II (PSII). It binds chlorophyll and helps catalyze the primary light-induced photochemical processes of PSII. PSII is a light-driven water:plastoquinone oxidoreductase, using light energy to abstract electrons from H(2)O, generating O(2) and a proton gradient subsequently used for ATP formation. The polypeptide is Photosystem II CP43 reaction center protein (Cuscuta exaltata (Tall dodder)).